A 227-amino-acid chain; its full sequence is Cytidylate kinase (227 aa).

12-20 (GPSGAGKGT) serves as a coordination point for ATP.

Belongs to the cytidylate kinase family. Type 1 subfamily.

The protein localises to the cytoplasm. It carries out the reaction CMP + ATP = CDP + ADP. The enzyme catalyses dCMP + ATP = dCDP + ADP. The sequence is that of Cytidylate kinase from Marinomonas sp. (strain MWYL1).